A 277-amino-acid chain; its full sequence is MASAGGGDCEGAGPEADRPHQRPFLIGVSGGTASGKSTVCEKIMELLGQNEVDHRQRKLVILSQDRFYKVLTAEQKAKALKGQYNFDHPDAFDNDLMHRTLKNIVEGKTVEVPTYDFVTHSRLAETTVVYPADVVLFEGILVFYSQEIRDMFHLRLFVDTDSDVRLSRRVLRDVQRGRDLEQILTQYTTFVKPAFEEFCLPTKKYADVIIPRGVDNMVAINLIVQHIQDILNGDICKWHRAGANGRSHKRTFPEPGEHPAVLASGKRSHLESSSRPH.

Over residues 1–10 (MASAGGGDCE) the composition is skewed to gly residues. The disordered stretch occupies residues 1-29 (MASAGGGDCEGAGPEADRPHQRPFLIGVS). 30–38 (GGTASGKST) provides a ligand contact to ATP. The substrate site is built by Asp87, Tyr115, His120, Arg169, Arg178, and Gln186. Asp215 lines the ATP pocket. The interval 246-277 (RSHKRTFPEPGEHPAVLASGKRSHLESSSRPH) is disordered. Thr251 is subject to Phosphothreonine. Residues 268–277 (SHLESSSRPH) are compositionally biased toward basic and acidic residues.

Belongs to the uridine kinase family.

It catalyses the reaction uridine + ATP = UMP + ADP + H(+). It carries out the reaction cytidine + ATP = CMP + ADP + H(+). It functions in the pathway pyrimidine metabolism; CTP biosynthesis via salvage pathway; CTP from cytidine: step 1/3. It participates in pyrimidine metabolism; UMP biosynthesis via salvage pathway; UMP from uridine: step 1/1. In terms of biological role, phosphorylates uridine and cytidine to uridine monophosphate and cytidine monophosphate. Does not phosphorylate deoxyribonucleosides or purine ribonucleosides. Can use ATP or GTP as a phosphate donor. In Bos taurus (Bovine), this protein is Uridine-cytidine kinase 1 (UCK1).